The chain runs to 282 residues: Release factor glutamine methyltransferase (282 aa).

S-adenosyl-L-methionine-binding residues include D141, F169, and N186. Residue 186–189 (NPPY) participates in substrate binding.

This sequence belongs to the protein N5-glutamine methyltransferase family. PrmC subfamily.

The catalysed reaction is L-glutaminyl-[peptide chain release factor] + S-adenosyl-L-methionine = N(5)-methyl-L-glutaminyl-[peptide chain release factor] + S-adenosyl-L-homocysteine + H(+). In terms of biological role, methylates the class 1 translation termination release factors RF1/PrfA and RF2/PrfB on the glutamine residue of the universally conserved GGQ motif. This Mycoplasma mycoides subsp. mycoides SC (strain CCUG 32753 / NCTC 10114 / PG1) protein is Release factor glutamine methyltransferase.